The following is a 414-amino-acid chain: Cell division protein FtsA (414 aa).

It belongs to the FtsA/MreB family. As to quaternary structure, self-interacts. Interacts with FtsZ.

Its subcellular location is the cell inner membrane. Functionally, cell division protein that is involved in the assembly of the Z ring. May serve as a membrane anchor for the Z ring. The protein is Cell division protein FtsA of Neisseria meningitidis serogroup B (strain ATCC BAA-335 / MC58).